The sequence spans 107 residues: Quaternary ammonium compound-resistance protein QacC (107 aa).

Topologically, residues 1–2 (MP) are cytoplasmic. Residues 3 to 20 (YIYLIIAISTEVIGSAFL) traverse the membrane as a helical segment. The Extracellular segment spans residues 21-29 (KSSEGFSKF). The helical transmembrane segment at 30–47 (IPSLGTIISFGICFYFLS) threads the bilayer. At 48 to 56 (KTMQHLPLN) the chain is on the cytoplasmic side. The chain crosses the membrane as a helical span at residues 57–75 (ITYATWAGLGLVLTTVVSI). At 76–85 (IIFKEQINLI) the chain is on the extracellular side. The chain crosses the membrane as a helical span at residues 86-103 (TIVSIVLIIVGVVSLNIF). Over 104 to 107 (GTSH) the chain is Cytoplasmic.

The protein belongs to the drug/metabolite transporter (DMT) superfamily. Small multidrug resistance (SMR) (TC 2.A.7.1) family.

The protein resides in the cell membrane. With respect to regulation, ethidium export is inhibited by N-ethylmaleimide (NEM). Functionally, multidrug exporter. Is implicated for the resistance to bacteriocidal quaternary ammonium compounds and ethidium bromide. This chain is Quaternary ammonium compound-resistance protein QacC, found in Staphylococcus aureus.